The primary structure comprises 60 residues: Temporin-CG1 (60 aa).

The first 22 residues, 1-22 (MFTLKKSLLLLFFLATINLSLC), serve as a signal peptide directing secretion. A propeptide spans 23–43 (EQERNAEEERRDDDERNAEVE) (removed in mature form).

In terms of tissue distribution, expressed by the skin glands.

It localises to the secreted. In terms of biological role, antimicrobial peptide active against a variety of Gram-positive and some Gram-negative bacterial strains. Has antifungal activity against a slime mold isolate. Has weak hemolytic activity against human erythrocytes. In Amolops chunganensis (Chungan torrent frog), this protein is Temporin-CG1.